A 148-amino-acid chain; its full sequence is Nucleoside diphosphate kinase (148 aa).

Residues Lys-9, Phe-57, Arg-85, Thr-91, Arg-102, and Asn-112 each contribute to the ATP site. The Pros-phosphohistidine intermediate role is filled by His-115.

The protein belongs to the NDK family. The cofactor is Mg(2+).

The catalysed reaction is a 2'-deoxyribonucleoside 5'-diphosphate + ATP = a 2'-deoxyribonucleoside 5'-triphosphate + ADP. It carries out the reaction a ribonucleoside 5'-diphosphate + ATP = a ribonucleoside 5'-triphosphate + ADP. Its function is as follows. Major role in the synthesis of nucleoside triphosphates other than ATP. The ATP gamma phosphate is transferred to the NDP beta phosphate via a ping-pong mechanism, using a phosphorylated active-site intermediate. The protein is Nucleoside diphosphate kinase of Helianthus annuus (Common sunflower).